The primary structure comprises 387 residues: Alkanesulfonate monooxygenase (387 aa).

The protein belongs to the SsuD family.

The enzyme catalyses an alkanesulfonate + FMNH2 + O2 = an aldehyde + FMN + sulfite + H2O + 2 H(+). Catalyzes the desulfonation of aliphatic sulfonates. The protein is Alkanesulfonate monooxygenase of Cupriavidus pinatubonensis (strain JMP 134 / LMG 1197) (Cupriavidus necator (strain JMP 134)).